A 515-amino-acid chain; its full sequence is Probable NADPH:adrenodoxin oxidoreductase, mitochondrial (515 aa).

Positions 52, 73, 81, and 119 each coordinate FAD. Residues 191–194 (QGNV), 236–237 (RR), and Glu248 contribute to the NADP(+) site. FAD contacts are provided by residues Trp419 and 426–428 (GSI). Gly426 is an NADP(+) binding site.

Belongs to the ferredoxin--NADP reductase type 1 family. Requires FAD as cofactor.

It localises to the mitochondrion inner membrane. It catalyses the reaction 2 reduced [adrenodoxin] + NADP(+) + H(+) = 2 oxidized [adrenodoxin] + NADPH. In Dictyostelium discoideum (Social amoeba), this protein is Probable NADPH:adrenodoxin oxidoreductase, mitochondrial (fdxr).